The following is a 250-amino-acid chain: Putative endonuclease (250 aa).

Its function is as follows. Putative endonuclease. This is Putative endonuclease from Escherichia coli (Enterobacteria phage T5).